Here is a 198-residue protein sequence, read N- to C-terminus: Holliday junction branch migration complex subunit RuvA (198 aa).

A domain I region spans residues 1 to 63 (MYDYIKGQLT…EDAQLLFGFH (63 aa)). Positions 64–142 (SEEEKDVFLK…EAPKEESSKL (79 aa)) are domain II. The tract at residues 143 to 147 (PKAKH) is flexible linker. Residues 148–198 (QENEQLDEAIEALLALGYKATELKKIRAFFEGTSETAEQYIKSALKMLMKG) form a domain III region.

The protein belongs to the RuvA family. In terms of assembly, homotetramer. Forms an RuvA(8)-RuvB(12)-Holliday junction (HJ) complex. HJ DNA is sandwiched between 2 RuvA tetramers; dsDNA enters through RuvA and exits via RuvB. An RuvB hexamer assembles on each DNA strand where it exits the tetramer. Each RuvB hexamer is contacted by two RuvA subunits (via domain III) on 2 adjacent RuvB subunits; this complex drives branch migration. In the full resolvosome a probable DNA-RuvA(4)-RuvB(12)-RuvC(2) complex forms which resolves the HJ.

It localises to the cytoplasm. Its function is as follows. The RuvA-RuvB-RuvC complex processes Holliday junction (HJ) DNA during genetic recombination and DNA repair, while the RuvA-RuvB complex plays an important role in the rescue of blocked DNA replication forks via replication fork reversal (RFR). RuvA specifically binds to HJ cruciform DNA, conferring on it an open structure. The RuvB hexamer acts as an ATP-dependent pump, pulling dsDNA into and through the RuvAB complex. HJ branch migration allows RuvC to scan DNA until it finds its consensus sequence, where it cleaves and resolves the cruciform DNA. The chain is Holliday junction branch migration complex subunit RuvA from Streptococcus equi subsp. zooepidemicus (strain MGCS10565).